Reading from the N-terminus, the 697-residue chain is MADTPSVAVQAPPGYGKTELFHLPLIALASKGDVEYVSFLFVPYTVLLANCMIRLGRCGCLNVAPVRNFIEEGCDGVTDLYVGIYDDLASTNFTDRIAAWENIVECTFRTNNVKLGYLIVDELHNFETEVYRQSQFGGITNLDFDAFEKAIFLSGTAPEAVADAALQRIGLTGLAKKSMDINELKRSEDLSRGLSSYPTRMFNLIKEKSKVPLGTNATTTASTNVRTSATTTASINVRTSATTTASINVRTSATTTESTNSNTNATTTESTNSSTNATTTASTNSSTNATTTESTNASAKEDANKDGNAEDNRFHPVTDINKEPYKRKGSQMVLLERKKLKAQFPNTSENMNVLQFLGFRSDEIKHLFLYGIDIYFCPEGVFTQYGLCKGCQKMFELCVCWAGQKVSYRRMAWEALAVERMLRNDEEYKEYLEDIEPYHGDPVGYLKFFSVKRREIYSQIQRNYAWYLAITRRRETISVLDSTRGKQGSQVFRMSGRQIKELYYKVWSNLRESKTEVLQYFLNWDEKKCQEEWEAKDDTVFVEALEKVGVFQRLRSMTSAGLQGPQYVKLQFSRHHRQLRSRYELSLGMHLRDQLALGVTPSKVPHWTAFLSMLIGLFYNKTFRQKLEYLLEQISEVWLLPHWLDLANVEVLAADNTRVPLYMLMVAVHKELDSDDVPDGRFDIILLCRDSSREVGE.

14 consecutive transmembrane segments (helical) span residues 65–85, 106–126, 131–151, 163–183, 194–214, 227–247, 286–306, 316–336, 361–381, 394–414, 419–439, 450–470, 487–507, and 558–578; these read PVRN…VGIY, CTFR…LHNF, YRQS…EKAI, DAAL…DINE, LSSY…VPLG, TSAT…TASI, STNA…ANKD, PVTD…VLLE, SDEI…PEGV, MFEL…MAWE, ERML…EPYH, SVKR…YLAI, QGSQ…YKVW, and TSAG…HHRQ. The tract at residues 246–321 is disordered; sequence SINVRTSATT…NRFHPVTDIN (76 aa). The span at 251-298 shows a compositional bias: low complexity; it reads TSATTTESTNSNTNATTTESTNSSTNATTTASTNSSTNATTTESTNAS. Residues 299–321 are compositionally biased toward basic and acidic residues; it reads AKEDANKDGNAEDNRFHPVTDIN.

The protein localises to the membrane. This is an uncharacterized protein from Saccharomyces cerevisiae (strain ATCC 204508 / S288c) (Baker's yeast).